The primary structure comprises 99 residues: DNA-directed RNA polymerase subunit omega (99 aa).

The protein belongs to the RNA polymerase subunit omega family. In terms of assembly, the RNAP catalytic core consists of 2 alpha, 1 beta, 1 beta' and 1 omega subunit. When a sigma factor is associated with the core the holoenzyme is formed, which can initiate transcription.

The catalysed reaction is RNA(n) + a ribonucleoside 5'-triphosphate = RNA(n+1) + diphosphate. Promotes RNA polymerase assembly. Latches the N- and C-terminal regions of the beta' subunit thereby facilitating its interaction with the beta and alpha subunits. In Thermus thermophilus (strain ATCC BAA-163 / DSM 7039 / HB27), this protein is DNA-directed RNA polymerase subunit omega.